Here is a 586-residue protein sequence, read N- to C-terminus: Lipoprotein LpqB (586 aa).

Residues 1–17 form the signal peptide; the sequence is MVRSVFALVFAAVLLGG. C18 carries N-palmitoyl cysteine lipidation. C18 carries the S-diacylglycerol cysteine lipid modification. The interval 26–45 is disordered; that stretch reads APQAIGTVERPAPSNLPKPI.

This sequence belongs to the LpqB lipoprotein family.

The protein resides in the cell membrane. This Mycobacterium ulcerans (strain Agy99) protein is Lipoprotein LpqB.